The following is a 357-amino-acid chain: UDP-N-acetylglucosamine--N-acetylmuramyl-(pentapeptide) pyrophosphoryl-undecaprenol N-acetylglucosamine transferase (357 aa).

UDP-N-acetyl-alpha-D-glucosamine contacts are provided by residues 14–16, Arg168, Ser198, and Gln292; that span reads TAG.

Belongs to the glycosyltransferase 28 family. MurG subfamily.

The protein localises to the cell membrane. The catalysed reaction is di-trans,octa-cis-undecaprenyl diphospho-N-acetyl-alpha-D-muramoyl-L-alanyl-D-glutamyl-meso-2,6-diaminopimeloyl-D-alanyl-D-alanine + UDP-N-acetyl-alpha-D-glucosamine = di-trans,octa-cis-undecaprenyl diphospho-[N-acetyl-alpha-D-glucosaminyl-(1-&gt;4)]-N-acetyl-alpha-D-muramoyl-L-alanyl-D-glutamyl-meso-2,6-diaminopimeloyl-D-alanyl-D-alanine + UDP + H(+). Its pathway is cell wall biogenesis; peptidoglycan biosynthesis. In terms of biological role, cell wall formation. Catalyzes the transfer of a GlcNAc subunit on undecaprenyl-pyrophosphoryl-MurNAc-pentapeptide (lipid intermediate I) to form undecaprenyl-pyrophosphoryl-MurNAc-(pentapeptide)GlcNAc (lipid intermediate II). The protein is UDP-N-acetylglucosamine--N-acetylmuramyl-(pentapeptide) pyrophosphoryl-undecaprenol N-acetylglucosamine transferase of Oceanobacillus iheyensis (strain DSM 14371 / CIP 107618 / JCM 11309 / KCTC 3954 / HTE831).